The chain runs to 160 residues: Phosphopantetheine adenylyltransferase (160 aa).

Thr-10 lines the substrate pocket. ATP is bound by residues 10-11 and His-18; that span reads TF. Substrate-binding residues include Lys-42, Leu-74, and Arg-88. ATP contacts are provided by residues 89–91, Glu-99, and 124–130; these read GLR and NSFISST.

The protein belongs to the bacterial CoaD family. As to quaternary structure, homohexamer. Requires Mg(2+) as cofactor.

The protein localises to the cytoplasm. It carries out the reaction (R)-4'-phosphopantetheine + ATP + H(+) = 3'-dephospho-CoA + diphosphate. It functions in the pathway cofactor biosynthesis; coenzyme A biosynthesis; CoA from (R)-pantothenate: step 4/5. Its function is as follows. Reversibly transfers an adenylyl group from ATP to 4'-phosphopantetheine, yielding dephospho-CoA (dPCoA) and pyrophosphate. The polypeptide is Phosphopantetheine adenylyltransferase (Aeromonas salmonicida (strain A449)).